Consider the following 2326-residue polypeptide: Telomere-associated protein RIF1 (2326 aa).

Disordered regions lie at residues 381-410 (QGTP…SPAT), 1105-1965 (YTQS…CITP), and 1993-2050 (VENK…DDSL). A compositionally biased stretch (polar residues) spans 382-396 (GTPSRVPSNPNSANP). Basic and acidic residues-rich tracts occupy residues 1112 to 1126 (SLEK…EDFK) and 1150 to 1182 (CKVD…RGDR). The span at 1216 to 1225 (SAISCSSTSS) shows a compositional bias: low complexity. Composition is skewed to polar residues over residues 1233–1242 (QPASRRQSFI) and 1252–1270 (SRPF…SQSA). The span at 1290-1299 (KSGEESRKSS) shows a compositional bias: basic and acidic residues. Composition is skewed to polar residues over residues 1318–1332 (MEQQ…VTNS) and 1341–1353 (SFVS…SPES). The segment covering 1376–1402 (PDIKKAEAVMAEIEKVRAFEMDSKENT) has biased composition (basic and acidic residues). Over residues 1403–1412 (PPKTAVSSEQ) the composition is skewed to polar residues. Composition is skewed to basic and acidic residues over residues 1448–1480 (QDKE…DASQ), 1489–1511 (ASEH…DLGS), and 1519–1539 (GADE…KSDS). The span at 1564–1573 (SSQGLLSSIE) shows a compositional bias: polar residues. A compositionally biased stretch (basic residues) spans 1586–1595 (SLKKKSGKTK). Over residues 1596-1609 (NKSDSLEGKRKDVQ) the composition is skewed to basic and acidic residues. Composition is skewed to polar residues over residues 1610–1640 (PESQ…SEVS) and 1671–1683 (RTSP…SVEQ). Residues 1697–1712 (RVSDEVLKGDENKCIE) are compositionally biased toward basic and acidic residues. Over residues 1713–1745 (KQSSVEQHSSVQPENVQGANTSGSDLSSLQMQD) the composition is skewed to polar residues. The segment covering 1776–1785 (SKSEDPRELI) has biased composition (basic and acidic residues). Polar residues predominate over residues 1795–1813 (AVSTAEVSGSSNLEESLSI). 3 stretches are compositionally biased toward basic and acidic residues: residues 1869 to 1884 (VEIK…DRAE), 1908 to 1925 (SEEK…HGEM), and 1932 to 1954 (DGSK…KEEA). Residues 2009-2036 (SFTSVNGSPSGVQARCTWSPSASPSTSI) are compositionally biased toward polar residues.

It belongs to the RIF1 family. Interacts with TP53BP1 (when phosphorylated by ATM).

The protein resides in the nucleus. Its subcellular location is the chromosome. The protein localises to the telomere. It is found in the cytoplasm. It localises to the cytoskeleton. The protein resides in the spindle. Its function is as follows. Key regulator of TP53BP1 that plays a key role in the repair of double-strand DNA breaks (DSBs) in response to DNA damage: acts by promoting non-homologous end joining (NHEJ)-mediated repair of DSBs. In response to DNA damage, interacts with ATM-phosphorylated TP53BP1, allowing recruitment to DNA DSBs. Once recruited to DSBs, RIF1 and TP53BP1 act by promoting NHEJ-mediated repair of DSBs. In the same time, RIF1 and TP53BP1 specifically counteract DSBs resection via homologous recombination (HR) during G1 phase. The sequence is that of Telomere-associated protein RIF1 from Gallus gallus (Chicken).